A 244-amino-acid chain; its full sequence is Geranylgeranylglyceryl phosphate synthase (244 aa).

The Mg(2+) site is built by Asp-21 and Thr-50. Sn-glycerol 1-phosphate-binding positions include Tyr-168–Gly-174, Gly-200–Gly-201, and Gly-222–Asn-223.

This sequence belongs to the GGGP/HepGP synthase family. Group II subfamily. The cofactor is Mg(2+).

It localises to the cytoplasm. It catalyses the reaction sn-glycerol 1-phosphate + (2E,6E,10E)-geranylgeranyl diphosphate = sn-3-O-(geranylgeranyl)glycerol 1-phosphate + diphosphate. It functions in the pathway membrane lipid metabolism; glycerophospholipid metabolism. Functionally, prenyltransferase that catalyzes the transfer of the geranylgeranyl moiety of geranylgeranyl diphosphate (GGPP) to the C3 hydroxyl of sn-glycerol-1-phosphate (G1P). This reaction is the first ether-bond-formation step in the biosynthesis of archaeal membrane lipids. The polypeptide is Geranylgeranylglyceryl phosphate synthase (Sulfurisphaera tokodaii (strain DSM 16993 / JCM 10545 / NBRC 100140 / 7) (Sulfolobus tokodaii)).